A 421-amino-acid polypeptide reads, in one-letter code: WD repeat and SOCS box-containing protein 1 (421 aa).

WD repeat units follow at residues 124 to 165 (SRCV…LLLN), 168 to 208 (DHIE…NMVK), 212 to 251 (AHQN…MIRK), 254 to 293 (GHHH…LLME), and 309 to 346 (ANDR…DCPV). The SOCS box domain occupies 372–421 (DGSVYFWATPRQVPSLQHICRMSIRRVMSTQEVQKLPVPSKILAFLSYRG).

As to quaternary structure, interacts with DIO2. Component of the probable ECS(WSB1) E3 ubiquitin-protein ligase complex which contains CUL5, RNF7/RBX2, Elongin BC complex and WSB1. Component of a probable ECS-like E3 ubiquitin-protein ligase complex which contains CUL5, RBX1, Elongin BC complex and WSB1. Interacts with CUL5, RNF7, ELOB and ELOC. Binds to HIPK2 through WD40 repeats.

It participates in protein modification; protein ubiquitination. In terms of biological role, probable substrate-recognition component of a SCF-like ECS (Elongin-Cullin-SOCS-box protein) E3 ubiquitin ligase complex which mediates the ubiquitination and subsequent proteasomal degradation of target proteins. Recognizes type II iodothyronine deiodinase/DIO2. Confers constitutive instability to HIPK2 through proteasomal degradation. The sequence is that of WD repeat and SOCS box-containing protein 1 (Wsb1) from Mus musculus (Mouse).